Reading from the N-terminus, the 627-residue chain is (R)-linalool synthase 1, chloroplastic (627 aa).

The N-terminal 21 residues, 1–21, are a transit peptide targeting the chloroplast; sequence MAFVSIAPLASRCCVHKSFVS. Mg(2+) is bound by residues Asp-378, Asp-382, and Glu-530. The short motif at 378–382 is the DDXXD motif element; that stretch reads DDIYD.

It belongs to the terpene synthase family. Tpsd subfamily. It depends on Mg(2+) as a cofactor. Requires Mn(2+) as cofactor.

The protein resides in the plastid. Its subcellular location is the chloroplast. The catalysed reaction is (2E)-geranyl diphosphate + H2O = (R)-linalool + diphosphate. It participates in terpene metabolism; oleoresin biosynthesis. Functionally, terpene synthase (TPS) involved in the biosynthesis of monoterpene natural products included in conifer oleoresin secretions and volatile emissions; these compounds contribute to biotic and abiotic stress defense against herbivores and pathogens. Catalyzes the conversion of (2E)-geranyl diphosphate (GPP) to (R)-linalool. In Picea sitchensis (Sitka spruce), this protein is (R)-linalool synthase 1, chloroplastic.